The sequence spans 301 residues: 4-hydroxy-tetrahydrodipicolinate synthase (301 aa).

Thr55 contacts pyruvate. The Proton donor/acceptor role is filled by Tyr143. Lys171 functions as the Schiff-base intermediate with substrate in the catalytic mechanism. Ile213 is a binding site for pyruvate.

It belongs to the DapA family. As to quaternary structure, homotetramer; dimer of dimers.

It is found in the cytoplasm. The catalysed reaction is L-aspartate 4-semialdehyde + pyruvate = (2S,4S)-4-hydroxy-2,3,4,5-tetrahydrodipicolinate + H2O + H(+). Its pathway is amino-acid biosynthesis; L-lysine biosynthesis via DAP pathway; (S)-tetrahydrodipicolinate from L-aspartate: step 3/4. Catalyzes the condensation of (S)-aspartate-beta-semialdehyde [(S)-ASA] and pyruvate to 4-hydroxy-tetrahydrodipicolinate (HTPA). In Psychrobacter arcticus (strain DSM 17307 / VKM B-2377 / 273-4), this protein is 4-hydroxy-tetrahydrodipicolinate synthase.